The sequence spans 598 residues: UvrABC system protein C (598 aa).

Residues 14–91 (DSPGCYLHKD…IQKNMPKYNI (78 aa)) form the GIY-YIG domain. The UVR domain maps to 196-231 (DKIIEDLRSKMLAASEEMAFERAAEYRDLISGIATM).

The protein belongs to the UvrC family. Interacts with UvrB in an incision complex.

The protein resides in the cytoplasm. The UvrABC repair system catalyzes the recognition and processing of DNA lesions. UvrC both incises the 5' and 3' sides of the lesion. The N-terminal half is responsible for the 3' incision and the C-terminal half is responsible for the 5' incision. The polypeptide is UvrABC system protein C (Streptococcus pyogenes serotype M6 (strain ATCC BAA-946 / MGAS10394)).